The chain runs to 356 residues: UDP-N-acetylglucosamine--N-acetylmuramyl-(pentapeptide) pyrophosphoryl-undecaprenol N-acetylglucosamine transferase (356 aa).

Residues S198 and Q289 each coordinate UDP-N-acetyl-alpha-D-glucosamine.

Belongs to the glycosyltransferase 28 family. MurG subfamily.

The protein localises to the cell membrane. The enzyme catalyses Mur2Ac(oyl-L-Ala-gamma-D-Glu-L-Lys-D-Ala-D-Ala)-di-trans,octa-cis-undecaprenyl diphosphate + UDP-N-acetyl-alpha-D-glucosamine = beta-D-GlcNAc-(1-&gt;4)-Mur2Ac(oyl-L-Ala-gamma-D-Glu-L-Lys-D-Ala-D-Ala)-di-trans,octa-cis-undecaprenyl diphosphate + UDP + H(+). The protein operates within cell wall biogenesis; peptidoglycan biosynthesis. Its function is as follows. Cell wall formation. Catalyzes the transfer of a GlcNAc subunit on undecaprenyl-pyrophosphoryl-MurNAc-pentapeptide (lipid intermediate I) to form undecaprenyl-pyrophosphoryl-MurNAc-(pentapeptide)GlcNAc (lipid intermediate II). The polypeptide is UDP-N-acetylglucosamine--N-acetylmuramyl-(pentapeptide) pyrophosphoryl-undecaprenol N-acetylglucosamine transferase (Streptococcus thermophilus (strain CNRZ 1066)).